A 126-amino-acid polypeptide reads, in one-letter code: UPF0212 protein TON_0350 (126 aa).

This sequence belongs to the UPF0212 family.

The polypeptide is UPF0212 protein TON_0350 (Thermococcus onnurineus (strain NA1)).